A 286-amino-acid chain; its full sequence is 4-hydroxybenzoate octaprenyltransferase (286 aa).

The next 9 helical transmembrane spans lie at 19-39 (AGWL…SHGF), 42-62 (WHLL…GCCV), 92-112 (ALVL…TTNA), 115-135 (IAWS…KRYV), 137-157 (MPQA…FAAV), 161-181 (VPLL…AYDT), 206-226 (FDVA…ALAL), 233-253 (AIYW…GWLI), and 264-284 (AFRL…LSYL).

This sequence belongs to the UbiA prenyltransferase family. Mg(2+) is required as a cofactor.

Its subcellular location is the cell inner membrane. The enzyme catalyses all-trans-octaprenyl diphosphate + 4-hydroxybenzoate = 4-hydroxy-3-(all-trans-octaprenyl)benzoate + diphosphate. The protein operates within cofactor biosynthesis; ubiquinone biosynthesis. In terms of biological role, catalyzes the prenylation of para-hydroxybenzoate (PHB) with an all-trans polyprenyl group. Mediates the second step in the final reaction sequence of ubiquinone-8 (UQ-8) biosynthesis, which is the condensation of the polyisoprenoid side chain with PHB, generating the first membrane-bound Q intermediate 3-octaprenyl-4-hydroxybenzoate. In Polaromonas sp. (strain JS666 / ATCC BAA-500), this protein is 4-hydroxybenzoate octaprenyltransferase.